The chain runs to 682 residues: DNA-directed RNA polymerase subunit beta' (682 aa).

Residues cysteine 69, cysteine 71, cysteine 87, and cysteine 90 each contribute to the Zn(2+) site. 3 residues coordinate Mg(2+): aspartate 489, aspartate 491, and aspartate 493.

This sequence belongs to the RNA polymerase beta' chain family. RpoC1 subfamily. In plastids the minimal PEP RNA polymerase catalytic core is composed of four subunits: alpha, beta, beta', and beta''. When a (nuclear-encoded) sigma factor is associated with the core the holoenzyme is formed, which can initiate transcription. The cofactor is Mg(2+). It depends on Zn(2+) as a cofactor.

Its subcellular location is the plastid. It localises to the chloroplast. It catalyses the reaction RNA(n) + a ribonucleoside 5'-triphosphate = RNA(n+1) + diphosphate. Functionally, DNA-dependent RNA polymerase catalyzes the transcription of DNA into RNA using the four ribonucleoside triphosphates as substrates. This Oryza nivara (Indian wild rice) protein is DNA-directed RNA polymerase subunit beta'.